The primary structure comprises 141 residues: Proteasome maturation protein (141 aa).

Residue lysine 39 forms a Glycyl lysine isopeptide (Lys-Gly) (interchain with G-Cter in SUMO2) linkage. The short motif at 68–72 is the High-affinity association with the preproteasome element; the sequence is RNIQG.

The protein belongs to the POMP/UMP1 family. Constituent of preproteasomes, but not of mature 20S proteasomes. Within the preproteasome, may directly interact with PSMB1/beta6, PSMB4/beta7, PSMB5/beta5, PSMB6/beta1 and PSMB9/beta1i. Interaction with PSMB8/beta5i has been observed in PubMed:10973495, but not in PubMed:10926487. Forms tetramers. As to expression, strongly expressed from the basal layer to the granular layer of healthy epidermis, whereas in KLICK patients there is a gradual decrease of expression toward the granular layer.

It is found in the cytoplasm. The protein localises to the cytosol. Its subcellular location is the nucleus. The protein resides in the microsome membrane. Functionally, molecular chaperone essential for the assembly of standard proteasomes and immunoproteasomes. Degraded after completion of proteasome maturation. Mediates the association of 20S preproteasome with the endoplasmic reticulum. This Homo sapiens (Human) protein is Proteasome maturation protein.